We begin with the raw amino-acid sequence, 464 residues long: Serine/threonine-protein kinase 38-like (464 aa).

At alanine 2 the chain carries N-acetylalanine. Residues 63–88 (KKLRRSQHARKETEFLRLKRTRLGLD) form an S100B binding region. Threonine 75 carries the phosphothreonine modification. A Protein kinase domain is found at 90-383 (FESLKVIGRG…VEEIKGHPFF (294 aa)). ATP contacts are provided by residues 96-104 (IGRGAFGEV) and lysine 119. The Proton acceptor role is filled by aspartate 213. Serine 282 carries the post-translational modification Phosphoserine; by autocatalysis. In terms of domain architecture, AGC-kinase C-terminal spans 384 to 453 (EGVDWEHIRE…KRFEGLTQRG (70 aa)). The residue at position 442 (threonine 442) is a Phosphothreonine; by STK24/MST3.

The protein belongs to the protein kinase superfamily. AGC Ser/Thr protein kinase family. In terms of assembly, homodimeric S100B binds two molecules of STK38L. Interacts with MICAL1; leading to inhibit the protein kinase activity by antagonizing activation by MST1/STK4. Interacts with MOB1 and MOB2. Mg(2+) serves as cofactor. In terms of tissue distribution, ubiquitously expressed with highest levels observed in the thymus.

It localises to the cytoplasm. The protein localises to the cytoskeleton. Its subcellular location is the membrane. The catalysed reaction is L-seryl-[protein] + ATP = O-phospho-L-seryl-[protein] + ADP + H(+). The enzyme catalyses L-threonyl-[protein] + ATP = O-phospho-L-threonyl-[protein] + ADP + H(+). With respect to regulation, activated by binding of S100B which releases autoinhibitory N-lobe interactions, enabling ATP to bind and the autophosphorylation of Ser-282. Thr-442 then undergoes calcium-dependent phosphorylation by STK24/MST3. Interactions between phosphorylated Thr-442 and the N-lobe promote additional structural changes that complete the activation of the kinase. Autoinhibition is also released by the binding of MOB1/MOBKL1A and MOB2/HCCA2 to the N-terminal of STK38L. In terms of biological role, involved in the regulation of structural processes in differentiating and mature neuronal cells. This is Serine/threonine-protein kinase 38-like from Homo sapiens (Human).